We begin with the raw amino-acid sequence, 268 residues long: Undecaprenyl-diphosphatase (268 aa).

The next 7 helical transmembrane spans lie at 5-25, 43-63, 84-104, 107-127, 184-204, 213-233, and 248-268; these read SIIS…IPVS, GNTF…LVYF, FSVL…HGFI, VLFE…IILY, AAEF…ALDL, FDDV…GIFV, and PFAI…WLLG.

The protein belongs to the UppP family.

The protein localises to the cell inner membrane. It catalyses the reaction di-trans,octa-cis-undecaprenyl diphosphate + H2O = di-trans,octa-cis-undecaprenyl phosphate + phosphate + H(+). In terms of biological role, catalyzes the dephosphorylation of undecaprenyl diphosphate (UPP). Confers resistance to bacitracin. This chain is Undecaprenyl-diphosphatase, found in Rhizobium meliloti (strain 1021) (Ensifer meliloti).